The sequence spans 242 residues: Large ribosomal subunit protein uL3 (242 aa).

Q151 is subject to N5-methylglutamine.

It belongs to the universal ribosomal protein uL3 family. Part of the 50S ribosomal subunit. Forms a cluster with proteins L14 and L19. In terms of processing, methylated by PrmB.

One of the primary rRNA binding proteins, it binds directly near the 3'-end of the 23S rRNA, where it nucleates assembly of the 50S subunit. The protein is Large ribosomal subunit protein uL3 of Zymomonas mobilis subsp. mobilis (strain ATCC 31821 / ZM4 / CP4).